The following is a 430-amino-acid chain: Glutamate-1-semialdehyde 2,1-aminomutase (430 aa).

Position 267 is an N6-(pyridoxal phosphate)lysine (Lys267).

This sequence belongs to the class-III pyridoxal-phosphate-dependent aminotransferase family. HemL subfamily. Homodimer. Pyridoxal 5'-phosphate is required as a cofactor.

It is found in the cytoplasm. It carries out the reaction (S)-4-amino-5-oxopentanoate = 5-aminolevulinate. The protein operates within porphyrin-containing compound metabolism; protoporphyrin-IX biosynthesis; 5-aminolevulinate from L-glutamyl-tRNA(Glu): step 2/2. This chain is Glutamate-1-semialdehyde 2,1-aminomutase, found in Anaeromyxobacter dehalogenans (strain 2CP-C).